A 151-amino-acid chain; its full sequence is Large ribosomal subunit protein uL13 (151 aa).

The interval 129–151 is disordered; sequence PTHPHDAQKPKELNINTIPGAES. A compositionally biased stretch (basic and acidic residues) spans 131–140; it reads HPHDAQKPKE.

This sequence belongs to the universal ribosomal protein uL13 family. As to quaternary structure, part of the 50S ribosomal subunit.

Its function is as follows. This protein is one of the early assembly proteins of the 50S ribosomal subunit, although it is not seen to bind rRNA by itself. It is important during the early stages of 50S assembly. This Trichormus variabilis (strain ATCC 29413 / PCC 7937) (Anabaena variabilis) protein is Large ribosomal subunit protein uL13.